Here is a 230-residue protein sequence, read N- to C-terminus: 2,3-bisphosphoglycerate-dependent phosphoglycerate mutase (230 aa).

Residues 10-17, 23-24, Arg-62, 89-92, Lys-100, 116-117, and 185-186 each bind substrate; these read RHGESKWN, TG, ERNY, RR, and GN. His-11 serves as the catalytic Tele-phosphohistidine intermediate. Glu-89 functions as the Proton donor/acceptor in the catalytic mechanism.

The protein belongs to the phosphoglycerate mutase family. BPG-dependent PGAM subfamily. As to quaternary structure, homodimer.

The catalysed reaction is (2R)-2-phosphoglycerate = (2R)-3-phosphoglycerate. Its pathway is carbohydrate degradation; glycolysis; pyruvate from D-glyceraldehyde 3-phosphate: step 3/5. Catalyzes the interconversion of 2-phosphoglycerate and 3-phosphoglycerate. The chain is 2,3-bisphosphoglycerate-dependent phosphoglycerate mutase from Buchnera aphidicola subsp. Cinara cedri (strain Cc).